We begin with the raw amino-acid sequence, 177 residues long: PLAC8-like protein 1 (177 aa).

Belongs to the cornifelin family.

This Mus musculus (Mouse) protein is PLAC8-like protein 1 (Plac8l1).